Consider the following 171-residue polypeptide: Translation initiation factor IF-3 (171 aa).

Belongs to the IF-3 family. In terms of assembly, monomer.

Its subcellular location is the cytoplasm. Its function is as follows. IF-3 binds to the 30S ribosomal subunit and shifts the equilibrium between 70S ribosomes and their 50S and 30S subunits in favor of the free subunits, thus enhancing the availability of 30S subunits on which protein synthesis initiation begins. This is Translation initiation factor IF-3 from Thermus thermophilus (strain ATCC BAA-163 / DSM 7039 / HB27).